The primary structure comprises 218 residues: Autophagy-related protein 101 (218 aa).

It belongs to the ATG101 family.

It is found in the cytoplasm. The protein localises to the preautophagosomal structure. In terms of biological role, autophagy factor required for autophagosome formation. The sequence is that of Autophagy-related protein 101 (atg101) from Xenopus laevis (African clawed frog).